An 885-amino-acid polypeptide reads, in one-letter code: Chitobiase (885 aa).

The first 27 residues, 1–27 (MNAFKLSALARLTATMGFLGGMGSAMA), serve as a signal peptide directing secretion. Cystine bridges form between Cys-56–Cys-66, Cys-400–Cys-408, and Cys-505–Cys-578. Glu-540 acts as the Proton donor in catalysis. The disordered stretch occupies residues 866–885 (EVQVRSVSPDGKRYSRAEKV). Over residues 875–885 (DGKRYSRAEKV) the composition is skewed to basic and acidic residues.

It belongs to the glycosyl hydrolase 20 family. Monomer.

The protein resides in the periplasm. It catalyses the reaction Hydrolysis of terminal non-reducing N-acetyl-D-hexosamine residues in N-acetyl-beta-D-hexosaminides.. It participates in glycan degradation; chitin degradation. Digests the beta-1,4-glycosidic bonds in N-acetylglucosamine (GlcNAc) oligomers (mainly dimers). In Serratia marcescens, this protein is Chitobiase (chb).